The chain runs to 119 residues: Large ribosomal subunit protein bL20 (119 aa).

It belongs to the bacterial ribosomal protein bL20 family. In terms of assembly, part of the 50S ribosomal subunit.

Its function is as follows. Binds directly to 23S ribosomal RNA and is necessary for the in vitro assembly process of the 50S ribosomal subunit. It is not involved in the protein synthesizing functions of that subunit. This chain is Large ribosomal subunit protein bL20 (rplT), found in Bacillus subtilis (strain 168).